The sequence spans 159 residues: Ribosomal RNA large subunit methyltransferase H (159 aa).

Residues leucine 76, glycine 108, and 127–132 contribute to the S-adenosyl-L-methionine site; that span reads FGLLTL.

The protein belongs to the RNA methyltransferase RlmH family. Homodimer.

The protein localises to the cytoplasm. It catalyses the reaction pseudouridine(1915) in 23S rRNA + S-adenosyl-L-methionine = N(3)-methylpseudouridine(1915) in 23S rRNA + S-adenosyl-L-homocysteine + H(+). Functionally, specifically methylates the pseudouridine at position 1915 (m3Psi1915) in 23S rRNA. The chain is Ribosomal RNA large subunit methyltransferase H from Streptococcus pyogenes serotype M5 (strain Manfredo).